Here is a 445-residue protein sequence, read N- to C-terminus: Phosphoglucosamine mutase (445 aa).

Serine 99 acts as the Phosphoserine intermediate in catalysis. Residues serine 99, aspartate 242, aspartate 244, and aspartate 246 each coordinate Mg(2+). A Phosphoserine modification is found at serine 99.

The protein belongs to the phosphohexose mutase family. Mg(2+) serves as cofactor. Activated by phosphorylation.

The enzyme catalyses alpha-D-glucosamine 1-phosphate = D-glucosamine 6-phosphate. Functionally, catalyzes the conversion of glucosamine-6-phosphate to glucosamine-1-phosphate. The sequence is that of Phosphoglucosamine mutase from Helicobacter pylori (strain G27).